The primary structure comprises 480 residues: Cysteine--tRNA ligase (480 aa).

Cys29 lines the Zn(2+) pocket. The 'HIGH' region signature appears at 31–41; the sequence is PTVYGHAHLGH. Cys221, His246, and Glu250 together coordinate Zn(2+). Positions 278–282 match the 'KMSKS' region motif; it reads KMGKS. Lys281 contacts ATP.

Belongs to the class-I aminoacyl-tRNA synthetase family. Monomer. Zn(2+) is required as a cofactor.

The protein resides in the cytoplasm. The catalysed reaction is tRNA(Cys) + L-cysteine + ATP = L-cysteinyl-tRNA(Cys) + AMP + diphosphate. This is Cysteine--tRNA ligase from Chlorobium chlorochromatii (strain CaD3).